The primary structure comprises 164 residues: MEMTNAQRLILSNQYKMMTMLDPANAERYRRLQTIIERGYGLQMRELDREFGELKEETCRTIIDIMEMYHALHVSWSNLQDQQSIDERRVTFLGFDAATEARYLGYVRFMVNVEGRYTHFYAGTHGFNAQTPMWEKYQRMLNVWHACPRQYHLSANEINQIINA.

Belongs to the UPF0304 family.

The sequence is that of UPF0304 protein YfbU from Escherichia coli O139:H28 (strain E24377A / ETEC).